The chain runs to 265 residues: Hydroxyethylthiazole kinase (265 aa).

Met43 provides a ligand contact to substrate. Lys118 and Thr165 together coordinate ATP. Substrate is bound at residue Gly192.

This sequence belongs to the Thz kinase family. Requires Mg(2+) as cofactor.

The catalysed reaction is 5-(2-hydroxyethyl)-4-methylthiazole + ATP = 4-methyl-5-(2-phosphooxyethyl)-thiazole + ADP + H(+). It participates in cofactor biosynthesis; thiamine diphosphate biosynthesis; 4-methyl-5-(2-phosphoethyl)-thiazole from 5-(2-hydroxyethyl)-4-methylthiazole: step 1/1. Its function is as follows. Catalyzes the phosphorylation of the hydroxyl group of 4-methyl-5-beta-hydroxyethylthiazole (THZ). The polypeptide is Hydroxyethylthiazole kinase (Pyrococcus furiosus (strain ATCC 43587 / DSM 3638 / JCM 8422 / Vc1)).